Reading from the N-terminus, the 523-residue chain is Asc-type amino acid transporter 1 (523 aa).

Positions 1 to 28 (MAGHTQQPSGRGNPRPAPSPSPVPGTVP) are disordered. A compositionally biased stretch (pro residues) spans 15 to 25 (RPAPSPSPVPG). Helical transmembrane passes span 40 to 60 (IGLLSACTIIIGNIIGSGIFI), 72 to 92 (VGLALFVWVLGGGVTALGSLC), 113 to 133 (IFGGLAGFLLLWSAVLIMYPT), 268 to 288 (AIFISIPLVTFVYTFTNIAYF), 310 to 330 (LLGYFSWVMPVSVALSTFGGI), 362 to 382 (CTPIPALLVCCGATAVIMLVG), 388 to 408 (INYVSFINYLCYGVTILGLLL), 424 to 444 (LLIPVAYLVFWAFLLVFSFIS), and 448 to 468 (VCGVGVIIILTGVPIFFLGVF). The disordered stretch occupies residues 499–523 (APEEEENGPCPPSLLPATDKPSKPQ).

The protein belongs to the amino acid-polyamine-organocation (APC) superfamily. As to quaternary structure, disulfide-linked heterodimer with the amino acid transport protein SLC3A2/4F2hc. As to expression, expressed in brain, heart, kidney, liver, lung, pancreas, placenta, and skeletal muscle.

Its subcellular location is the cell membrane. It catalyses the reaction L-alanine(in) + glycine(out) = L-alanine(out) + glycine(in). The enzyme catalyses L-serine(out) + L-alanine(in) = L-serine(in) + L-alanine(out). The catalysed reaction is L-threonine(out) + L-alanine(in) = L-threonine(in) + L-alanine(out). It carries out the reaction L-cysteine(out) + L-alanine(in) = L-cysteine(in) + L-alanine(out). It catalyses the reaction 2-aminoisobutanoate(out) + L-alanine(in) = 2-aminoisobutanoate(in) + L-alanine(out). The enzyme catalyses D-serine(out) + L-alanine(in) = D-serine(in) + L-alanine(out). The catalysed reaction is D-alanine(out) + L-alanine(in) = D-alanine(in) + L-alanine(out). It carries out the reaction L-valine(out) + L-alanine(in) = L-valine(in) + L-alanine(out). It catalyses the reaction L-methionine(out) + L-alanine(in) = L-methionine(in) + L-alanine(out). The enzyme catalyses beta-alanine(out) + L-alanine(in) = beta-alanine(in) + L-alanine(out). The catalysed reaction is D-cysteine(out) + L-alanine(in) = D-cysteine(in) + L-alanine(out). It carries out the reaction D-threonine(out) + L-alanine(in) = D-threonine(in) + L-alanine(out). It catalyses the reaction D-isoleucine(out) + D-serine(in) = D-isoleucine(in) + D-serine(out). The enzyme catalyses D-serine(in) = D-serine(out). Its function is as follows. Associates with SLC3A2/4F2hc to form a functional heterodimeric complex that translocates small neutral L- and D-amino acids across the plasma membrane. Preferentially mediates exchange transport, but can also operate via facilitated diffusion. Acts as a major transporter for glycine, L- and D-serine in the central nervous system. At the spinal cord and brainstem regulates glycine metabolism and glycinergic inhibitory neurotransmission by providing for glycine de novo synthesis from L-serine and glycine recycling from astrocytes to glycinergic motor neurons. At Schaffer collateral-CA1 synapses mediates D-serine and glycine release that modulates post-synaptic activation of NMDA receptors and excitatory glutamatergic transmission. May regulate D-serine release from mesenchymal progenitors located in developing subcutaneous adipose tissue, favoring white adipocyte over thermogenic beige adipocyte lineage commitment. The polypeptide is Asc-type amino acid transporter 1 (SLC7A10) (Homo sapiens (Human)).